Here is a 467-residue protein sequence, read N- to C-terminus: Ribosomal protein uS12 methylthiotransferase RimO (467 aa).

The MTTase N-terminal domain occupies 1–110 (MDLHGCAKNQ…LPQLIDSMFP (110 aa)). Positions 6, 42, 73, 153, 157, and 160 each coordinate [4Fe-4S] cluster. Residues 139-386 (LNFPRSTYIK…QNAQTSITEK (248 aa)) form the Radical SAM core domain. A TRAM domain is found at 389–467 (DSFIGKEIEV…NGFDLEAVAV (79 aa)).

It belongs to the methylthiotransferase family. RimO subfamily. The cofactor is [4Fe-4S] cluster.

It localises to the cytoplasm. It carries out the reaction L-aspartate(89)-[ribosomal protein uS12]-hydrogen + (sulfur carrier)-SH + AH2 + 2 S-adenosyl-L-methionine = 3-methylsulfanyl-L-aspartate(89)-[ribosomal protein uS12]-hydrogen + (sulfur carrier)-H + 5'-deoxyadenosine + L-methionine + A + S-adenosyl-L-homocysteine + 2 H(+). Functionally, catalyzes the methylthiolation of an aspartic acid residue of ribosomal protein uS12. The protein is Ribosomal protein uS12 methylthiotransferase RimO of Treponema denticola (strain ATCC 35405 / DSM 14222 / CIP 103919 / JCM 8153 / KCTC 15104).